We begin with the raw amino-acid sequence, 103 residues long: Large ribosomal subunit protein uL24 (103 aa).

Belongs to the universal ribosomal protein uL24 family. As to quaternary structure, part of the 50S ribosomal subunit.

In terms of biological role, one of two assembly initiator proteins, it binds directly to the 5'-end of the 23S rRNA, where it nucleates assembly of the 50S subunit. Its function is as follows. One of the proteins that surrounds the polypeptide exit tunnel on the outside of the subunit. This chain is Large ribosomal subunit protein uL24, found in Brucella ovis (strain ATCC 25840 / 63/290 / NCTC 10512).